Consider the following 236-residue polypeptide: CO-responsive transcriptional regulator RcoM (236 aa).

In terms of domain architecture, PAS spans 1-64 (MDDFAYNLRR…PLRPKVAVLL (64 aa)). His52 is a heme binding site. The HTH LytTR-type domain occupies 131–236 (VPLGLGETTE…VTRLRGLLAI (106 aa)).

Heme is required as a cofactor.

Activates the expression of the CowN protein in response to carbon monoxide (CO). Is required to sustain N(2)-dependent growth in the presence of low levels of carbon monoxide (CO). This chain is CO-responsive transcriptional regulator RcoM (rcoM), found in Rhodospirillum rubrum (strain ATCC 11170 / ATH 1.1.1 / DSM 467 / LMG 4362 / NCIMB 8255 / S1).